The chain runs to 260 residues: Cytochrome c oxidase subunit 3 (260 aa).

Helical transmembrane passes span 30-50 (LILW…VLLV), 81-101 (GMIL…WAFF), 126-146 (FLVP…VTWA), 158-178 (AIQS…LQAW), 196-216 (FFVA…FLAV), and 239-259 (WYWH…YWWG).

Belongs to the cytochrome c oxidase subunit 3 family. In terms of assembly, component of the cytochrome c oxidase (complex IV, CIV), a multisubunit enzyme composed of a catalytic core of 3 subunits and several supernumerary subunits. The complex exists as a monomer or a dimer and forms supercomplexes (SCs) in the inner mitochondrial membrane with ubiquinol-cytochrome c oxidoreductase (cytochrome b-c1 complex, complex III, CIII).

The protein localises to the mitochondrion inner membrane. The catalysed reaction is 4 Fe(II)-[cytochrome c] + O2 + 8 H(+)(in) = 4 Fe(III)-[cytochrome c] + 2 H2O + 4 H(+)(out). Its function is as follows. Component of the cytochrome c oxidase, the last enzyme in the mitochondrial electron transport chain which drives oxidative phosphorylation. The respiratory chain contains 3 multisubunit complexes succinate dehydrogenase (complex II, CII), ubiquinol-cytochrome c oxidoreductase (cytochrome b-c1 complex, complex III, CIII) and cytochrome c oxidase (complex IV, CIV), that cooperate to transfer electrons derived from NADH and succinate to molecular oxygen, creating an electrochemical gradient over the inner membrane that drives transmembrane transport and the ATP synthase. Cytochrome c oxidase is the component of the respiratory chain that catalyzes the reduction of oxygen to water. Electrons originating from reduced cytochrome c in the intermembrane space (IMS) are transferred via the dinuclear copper A center (CU(A)) of subunit 2 and heme A of subunit 1 to the active site in subunit 1, a binuclear center (BNC) formed by heme A3 and copper B (CU(B)). The BNC reduces molecular oxygen to 2 water molecules using 4 electrons from cytochrome c in the IMS and 4 protons from the mitochondrial matrix. The chain is Cytochrome c oxidase subunit 3 (COIII) from Pisaster ochraceus (Ochre sea star).